Here is a 717-residue protein sequence, read N- to C-terminus: Probable inactive histone-lysine N-methyltransferase SUVR2 (717 aa).

Positions 61–73 (QAIQESEEKKADE) are enriched in basic and acidic residues. Residues 61-136 (QAIQESEEKK…LGSPTLEGPS (76 aa)) are disordered. Low complexity predominate over residues 120 to 130 (SALASPSLGSP). The Zn(2+) site is built by cysteine 445, cysteine 446, cysteine 449, cysteine 453, cysteine 462, cysteine 529, cysteine 533, cysteine 535, and cysteine 539. In terms of domain architecture, Pre-SET spans 458–547 (MACRCATAFN…NCGNRVVQQG (90 aa)). The 130-residue stretch at 550–679 (NKLQVFFTPN…AMEELTWDYG (130 aa)) folds into the SET domain. S-adenosyl-L-methionine contacts are provided by residues 561–563 (RGW) and 635–636 (NH). A Zn(2+)-binding site is contributed by cysteine 638. S-adenosyl-L-methionine is bound at residue tyrosine 678. The 17-residue stretch at 690–706 (SPFHCQCGSDFCRVRKQ) folds into the Post-SET domain. The Zn(2+) site is built by cysteine 694, cysteine 696, and cysteine 701.

It belongs to the class V-like SAM-binding methyltransferase superfamily. Histone-lysine methyltransferase family. In terms of assembly, interacts with SUVR1, CHR19, CHR28 and itself. Interacts with CHR27.

It localises to the nucleus. Its subcellular location is the chromosome. Its function is as follows. Probable inactive histone-lysine methyltransferase that acts as regulator of transctiptional gene silencing independently of histone H3K9 methylation. Contributes to transcriptional gene silencing at RNA-directed DNA methylation (RdDM) target loci but also at RdDM-independent target loci. Forms a complex with SUVR1 and associates with the SNF2-related chromatin-remodeling proteins CHR19, CHR27, and CHR28, thereby mediating nucleosome positioning and transcriptional silencing. Does not possess histone-lysine methyltransferase activity in vitro, and the conserved catalytic sites of SUVR2 are dispensable for its function in transcriptional gene silencing. The protein is Probable inactive histone-lysine N-methyltransferase SUVR2 (SUVR2) of Arabidopsis thaliana (Mouse-ear cress).